Here is a 94-residue protein sequence, read N- to C-terminus: Large ribosomal subunit protein eL42 (94 aa).

The Zn(2+) site is built by C11, C14, C71, and C74. The C4-type zinc-finger motif lies at 11 to 74; that stretch reads CPFCKKHTIH…LDLRFRCTEC (64 aa).

This sequence belongs to the eukaryotic ribosomal protein eL42 family. Part of the 50S ribosomal subunit. It depends on Zn(2+) as a cofactor.

Functionally, binds to the 23S rRNA. In Pyrococcus furiosus (strain ATCC 43587 / DSM 3638 / JCM 8422 / Vc1), this protein is Large ribosomal subunit protein eL42.